The chain runs to 102 residues: ATP-dependent Clp protease adapter protein ClpS (102 aa).

It belongs to the ClpS family. In terms of assembly, binds to the N-terminal domain of the chaperone ClpA.

Functionally, involved in the modulation of the specificity of the ClpAP-mediated ATP-dependent protein degradation. The chain is ATP-dependent Clp protease adapter protein ClpS from Shewanella piezotolerans (strain WP3 / JCM 13877).